A 179-amino-acid chain; its full sequence is Large ribosomal subunit protein uL6 (179 aa).

This sequence belongs to the universal ribosomal protein uL6 family. In terms of assembly, part of the 50S ribosomal subunit.

Functionally, this protein binds to the 23S rRNA, and is important in its secondary structure. It is located near the subunit interface in the base of the L7/L12 stalk, and near the tRNA binding site of the peptidyltransferase center. In Pelobacter propionicus (strain DSM 2379 / NBRC 103807 / OttBd1), this protein is Large ribosomal subunit protein uL6.